We begin with the raw amino-acid sequence, 151 residues long: Large ribosomal subunit protein uL15 (151 aa).

The segment at 1–58 (MTSISLDSLKPNKGARKRKTRKGRGIAAGQGASCGFGMRGQKSRSGRPTRPGFEGGQM) is disordered. The span at 13–24 (KGARKRKTRKGR) shows a compositional bias: basic residues. The span at 26 to 38 (IAAGQGASCGFGM) shows a compositional bias: gly residues.

This sequence belongs to the universal ribosomal protein uL15 family. As to quaternary structure, part of the 50S ribosomal subunit.

Functionally, binds to the 23S rRNA. In Prochlorococcus marinus (strain SARG / CCMP1375 / SS120), this protein is Large ribosomal subunit protein uL15.